Consider the following 226-residue polypeptide: MEPIKNLPRLCRTLGYEFKNLELLTQALTHRSAANKHNERLEFLGDSILSIVISDALYHQFPKATEGDLSRMRATLVRGDTLTLIAKAFKLGDYLFLGPGELKSGGFRRESILADAVEAIIGAIYLDSDLEVCRKLLLHWYAERLAEIQPGVNQKDAKTLLQEYLQGLKKPLPDYQVINIEGDAHDQTFTVECRIDDLSESVIGVASSRRKAEQIAAAQVLELLKK.

In terms of domain architecture, RNase III spans 7-129; the sequence is LPRLCRTLGY…IIGAIYLDSD (123 aa). Glu-42 contacts Mg(2+). Residue Asp-46 is part of the active site. Mg(2+) is bound by residues Asp-115 and Glu-118. Glu-118 is a catalytic residue. The DRBM domain occupies 156-226; the sequence is DAKTLLQEYL…AAQVLELLKK (71 aa).

The protein belongs to the ribonuclease III family. Homodimer. Requires Mg(2+) as cofactor.

The protein resides in the cytoplasm. It catalyses the reaction Endonucleolytic cleavage to 5'-phosphomonoester.. Its function is as follows. Digests double-stranded RNA. Involved in the processing of primary rRNA transcript to yield the immediate precursors to the large and small rRNAs (23S and 16S). Processes some mRNAs, and tRNAs when they are encoded in the rRNA operon. Processes pre-crRNA and tracrRNA of type II CRISPR loci if present in the organism. The protein is Ribonuclease 3 of Shewanella sp. (strain MR-7).